The chain runs to 501 residues: MTAHLPILIVIIPLFVAMAARLLVRLSVPFTRGFVLAAALAVLASGAVALAETLVRGEPWRYYVSGWPPPWGIELVIDPLAGGLIVLVAFFGLAALVYAGPYLQGRTPREQGSFYALFLLAKAGLLGMCATGDLFNLYVFLEISSLAAYALIAFGGRRSIVAALRYLIIGTAAACFYLLGVGYLYAMTGSLNMADLAVLLPPLMDSPVVILALVFIVAGLGIKMALFPLHGWLPDAYSYTPAPVLAFMAAVMTKVSAYALYRILYFVTEAAGPVSPTLQVLGWMAAAGILFGSIMAIAQRDLWRMLAYSSVAQVGYIVLGLAVGNVLALYGALLHVLSHALVKGGLFFIAGGVSWETGVRRVSDFVGIAKKMPLTMGAFVAAALSMIGLPPTLGFFSKWYLVLGCLEAGAWVFVAVLVVSSLLTAVYFFRVIENAYLKGLPQPGARAERPVPPGARRFRLELPASMLVPILVLGIGVVVLGLFNEQIISNVIQYALPWRLP.

The next 14 membrane-spanning stretches (helical) occupy residues 4–24 (HLPILIVIIPLFVAMAARLLV), 34–54 (FVLAAALAVLASGAVALAETL), 80–100 (LAGGLIVLVAFFGLAALVYAG), 112–132 (GSFYALFLLAKAGLLGMCATG), 134–154 (LFNLYVFLEISSLAAYALIAF), 167–187 (LIIGTAAACFYLLGVGYLYAM), 207–227 (PVVILALVFIVAGLGIKMALF), 241–261 (PAPVLAFMAAVMTKVSAYALY), 278–298 (LQVLGWMAAAGILFGSIMAIA), 314–334 (VGYIVLGLAVGNVLALYGALL), 335–355 (HVLSHALVKGGLFFIAGGVSW), 376–396 (MGAFVAAALSMIGLPPTLGFF), 409–429 (GAWVFVAVLVVSSLLTAVYFF), and 463–483 (PASMLVPILVLGIGVVVLGLF).

The protein belongs to the complex I subunit 2 family. In terms of assembly, NDH-1 is composed of 14 different subunits. Subunits NuoA, H, J, K, L, M, N constitute the membrane sector of the complex.

It is found in the cell membrane. It catalyses the reaction a quinone + NADH + 5 H(+)(in) = a quinol + NAD(+) + 4 H(+)(out). Functionally, NDH-1 shuttles electrons from NADH, via FMN and iron-sulfur (Fe-S) centers, to quinones in the respiratory chain. The immediate electron acceptor for the enzyme in this species is believed to be a menaquinone. Couples the redox reaction to proton translocation (for every two electrons transferred, four hydrogen ions are translocated across the cytoplasmic membrane), and thus conserves the redox energy in a proton gradient. This Desulforudis audaxviator (strain MP104C) protein is NADH-quinone oxidoreductase subunit N.